A 399-amino-acid chain; its full sequence is Acetate kinase (399 aa).

A Mg(2+)-binding site is contributed by Asn-8. Lys-15 lines the ATP pocket. Arg-89 serves as a coordination point for substrate. Asp-146 (proton donor/acceptor) is an active-site residue. ATP is bound by residues 206–210 (HVGNG), 283–285 (DMR), and 331–335 (GMGEN). Glu-383 is a binding site for Mg(2+).

The protein belongs to the acetokinase family. Homodimer. Requires Mg(2+) as cofactor. The cofactor is Mn(2+).

It localises to the cytoplasm. It carries out the reaction acetate + ATP = acetyl phosphate + ADP. It participates in metabolic intermediate biosynthesis; acetyl-CoA biosynthesis; acetyl-CoA from acetate: step 1/2. Functionally, catalyzes the formation of acetyl phosphate from acetate and ATP. Can also catalyze the reverse reaction. The chain is Acetate kinase from Streptococcus equi subsp. zooepidemicus (strain H70).